The chain runs to 243 residues: Uridylate kinase (243 aa).

14–17 lines the ATP pocket; sequence KLSG. Glycine 57 contributes to the UMP binding site. The ATP site is built by glycine 58 and arginine 62. UMP contacts are provided by residues aspartate 77 and 139–146; that span reads TGRPYFTT. Asparagine 167, tyrosine 173, and aspartate 176 together coordinate ATP.

The protein belongs to the UMP kinase family. Homohexamer.

Its subcellular location is the cytoplasm. The catalysed reaction is UMP + ATP = UDP + ADP. Its pathway is pyrimidine metabolism; CTP biosynthesis via de novo pathway; UDP from UMP (UMPK route): step 1/1. With respect to regulation, inhibited by UTP. In terms of biological role, catalyzes the reversible phosphorylation of UMP to UDP. This chain is Uridylate kinase, found in Mycoplasmopsis pulmonis (strain UAB CTIP) (Mycoplasma pulmonis).